The primary structure comprises 134 residues: Small ribosomal subunit protein uS11 (134 aa).

This sequence belongs to the universal ribosomal protein uS11 family. As to quaternary structure, part of the 30S ribosomal subunit. Interacts with proteins S7 and S18. Binds to IF-3.

In terms of biological role, located on the platform of the 30S subunit, it bridges several disparate RNA helices of the 16S rRNA. Forms part of the Shine-Dalgarno cleft in the 70S ribosome. This Delftia acidovorans (strain DSM 14801 / SPH-1) protein is Small ribosomal subunit protein uS11.